Reading from the N-terminus, the 401-residue chain is O-antigen ligase (401 aa).

Residues 1–20 (MFAATRLSRLRHDTSRILSH) lie on the Cytoplasmic side of the membrane. A helical membrane pass occupies residues 21-37 (WILPLGWLALLTGMFWV). At 38 to 42 (GDRSD) the chain is on the periplasmic side. Residues 43 to 61 (YHRLFYILLAAPTLLYVIL) form a helical membrane-spanning segment. At 62–72 (QPRLLRPLTGS) the chain is on the cytoplasmic side. Residues 73–92 (PLFIAFLAFSSYMMLSLSWS) traverse the membrane as a helical segment. The Periplasmic portion of the chain corresponds to 93–103 (TPENSTGSLLK). A helical transmembrane segment spans residues 104–122 (RPLYIALLFFCAAILALEA). Residues 123–129 (PLRLKTA) are Cytoplasmic-facing. A helical membrane pass occupies residues 130–150 (TWLAALGAVISAAATLLRYYW). Topologically, residues 151 to 161 (DANPLRLTGYG) are periplasmic. A helical transmembrane segment spans residues 162-183 (ALYNPLLSAHVYGAFTALWLAY). Residues 184-189 (WMQSRP) are Cytoplasmic-facing. A helical membrane pass occupies residues 190 to 208 (ILAPLPLISLALLGGLLIA). Over 209-212 (TGSR) the chain is Periplasmic. A helical transmembrane segment spans residues 213 to 229 (TPLVGLTAALMWLVLAG). Residues 230 to 234 (DRKKA) lie on the Cytoplasmic side of the membrane. The helical transmembrane segment at 235–252 (LIALALALAGALLGYILY) threads the bilayer. The Periplasmic segment spans residues 253–306 (PEVITQRGASFRPEIWADALRQISEHPWLGHGYDHPMRIVLSNGMLLADPHNIE). A WZY-C region spans residues 258–319 (QRGASFRPEI…LFAGGIIGLL (62 aa)). The helical transmembrane segment at 307-331 (LGVLFAGGIIGLLLWVAIYALAFGF) threads the bilayer. The Cytoplasmic segment spans residues 332-339 (SWKNRKSP). Residues 340-357 (AVLLASTWLVFGLAAGLT) traverse the membrane as a helical segment. Over 358–368 (EGNAFLPRPKE) the chain is Periplasmic. Residues 369–385 (HWFLIWIPMALLYALWI) form a helical membrane-spanning segment. Over 386–401 (QQRFAASRRGEDIAAP) the chain is Cytoplasmic.

It belongs to the O-antigen ligase family. As to quaternary structure, homodimer.

The protein resides in the cell inner membrane. The catalysed reaction is a lipid-linked O antigen + a lipid A-core oligosaccharide = a lipopolysaccharide + a polyisoprenyl diphosphate.. The protein operates within bacterial outer membrane biogenesis; lipopolysaccharide biosynthesis. Its activity is regulated as follows. Activity does not require ATP and magnesium ions. Its function is as follows. Transferase involved in the biosynthesis of the lipopolysaccharide (LPS). Catalyzes the transfer of a polymerized O-antigen molecule from its polyprenyl diphosphate membrane anchor to a terminal sugar of the lipid A-core oligosaccharide, finalizing the biosynthesis of the lipopolysaccharide. Required for the attachment of both A-band and B-band O-antigens, two forms of O-antigen produced by P.aeruginosa, onto the lipid A-core receptors. Important for cell wall integrity and motility of the bacteria. This is O-antigen ligase from Pseudomonas aeruginosa (strain ATCC 15692 / DSM 22644 / CIP 104116 / JCM 14847 / LMG 12228 / 1C / PRS 101 / PAO1).